We begin with the raw amino-acid sequence, 223 residues long: DNA mismatch repair protein MutH (223 aa).

This sequence belongs to the MutH family.

It is found in the cytoplasm. Functionally, sequence-specific endonuclease that cleaves unmethylated GATC sequences. It is involved in DNA mismatch repair. The polypeptide is DNA mismatch repair protein MutH (Shewanella baltica (strain OS185)).